The primary structure comprises 468 residues: uncharacterized protein (468 aa).

The signal sequence occupies residues M1–A27. PbH1 repeat units follow at residues K125–G154, S156–G185, M189–G214, I216–G238, V249–G283, G284–S305, A312–G334, and N397–K420.

The protein localises to the secreted. This is an uncharacterized protein from Bacillus subtilis (strain 168).